A 114-amino-acid polypeptide reads, in one-letter code: Large ribosomal subunit protein uL18 (114 aa).

Belongs to the universal ribosomal protein uL18 family. Part of the 50S ribosomal subunit; part of the 5S rRNA/L5/L18/L25 subcomplex. Contacts the 5S and 23S rRNAs.

Functionally, this is one of the proteins that bind and probably mediate the attachment of the 5S RNA into the large ribosomal subunit, where it forms part of the central protuberance. This Bacteroides fragilis (strain ATCC 25285 / DSM 2151 / CCUG 4856 / JCM 11019 / LMG 10263 / NCTC 9343 / Onslow / VPI 2553 / EN-2) protein is Large ribosomal subunit protein uL18.